A 382-amino-acid chain; its full sequence is MQDAAPRLTFTLRDEERLMMKIGVFVPIGNNGWLISTHAPQYMPTFELNKAIAQKAEHYHFDFALSMIKLRGFGGKTEFWDHNLESFTLMAGLAAVTSRIQIYATAATLTLPPAIVARMAATIDSISGGRFGVNLVTGWQKPEYEQMGIWPGDDYFSRRYDYLTEYVQVLRDLWGTGKSDFKGDFFTMNDCRVSPQPSIPMKVICAGQSDAGMAFSAQYADFNFCFGKGVNTPTAFAPTAARMKQATEQTGRDVGSYVLFMVIADETDDATRAKWEHYKAGADEEALSWLTEQSQKDTRSGTDTNVRQMADPTSAVNINMGTLVGSYASVARMLDEVASVPGAEGVLLTFDDFLSGIETFGERIQPLMQCRAHLSALTQEVA.

FMN is bound by residues 68 to 69 (IK), asparagine 134, glutamate 143, 159 to 160 (RY), and serine 209.

This sequence belongs to the NtaA/SnaA/DszA monooxygenase family. RutA subfamily.

It carries out the reaction uracil + FMNH2 + NADH + O2 = (Z)-3-ureidoacrylate + FMN + NAD(+) + H2O + H(+). The catalysed reaction is thymine + FMNH2 + NADH + O2 = (Z)-2-methylureidoacrylate + FMN + NAD(+) + H2O + H(+). Its function is as follows. Catalyzes the pyrimidine ring opening between N-3 and C-4 by an unusual flavin hydroperoxide-catalyzed mechanism, adding oxygen atoms in the process to yield ureidoacrylate peracid, that immediately reacts with FMN forming ureidoacrylate and FMN-N(5)-oxide. The FMN-N(5)-oxide reacts spontaneously with NADH to produce FMN. Requires the flavin reductase RutF to regenerate FMN in vivo. This is Pyrimidine monooxygenase RutA from Shigella flexneri serotype X (strain 2002017).